The sequence spans 555 residues: Beta-caryophyllene synthase (555 aa).

The Mg(2+) site is built by D313, D317, D456, and E464. Residues 313–317 carry the DDXXD motif motif; that stretch reads DDIYD.

This sequence belongs to the terpene synthase family. Requires Mg(2+) as cofactor.

It carries out the reaction (2E,6E)-farnesyl diphosphate = (+)-(E)-beta-caryophyllene + diphosphate. It participates in secondary metabolite biosynthesis; terpenoid biosynthesis. Its function is as follows. Sesquiterpene synthase converting farnesyl diphosphate to beta-caryophyllene as the major product. The chain is Beta-caryophyllene synthase from Phyla dulcis (Aztec sweet herb).